A 187-amino-acid polypeptide reads, in one-letter code: Adenylate kinase (187 aa).

10-15 (GSGKGT) contributes to the ATP binding site. An NMP region spans residues 30–59 (STGDMLRAEIAAGSELGKQAKAVMDAGNLV). AMP contacts are provided by residues Thr31, Arg36, 57–59 (NLV), 85–88 (GYPR), and Gln92. The interval 126-136 (GRAKEQGRADD) is LID. Arg127 contacts ATP. AMP contacts are provided by Arg133 and Arg144. Position 172 (Gly172) interacts with ATP.

The protein belongs to the adenylate kinase family. In terms of assembly, monomer.

Its subcellular location is the cytoplasm. The enzyme catalyses AMP + ATP = 2 ADP. Its pathway is purine metabolism; AMP biosynthesis via salvage pathway; AMP from ADP: step 1/1. In terms of biological role, catalyzes the reversible transfer of the terminal phosphate group between ATP and AMP. Plays an important role in cellular energy homeostasis and in adenine nucleotide metabolism. The chain is Adenylate kinase from Stenotrophomonas maltophilia (strain R551-3).